Reading from the N-terminus, the 356-residue chain is Cysteine proteinase 3 (356 aa).

An N-terminal signal peptide occupies residues 1 to 16; it reads MSRLSLVLILVAGLFA. A propeptide spans 17-138 (activation peptide); the sequence is TALAGPATFA…KGNLKLTNVV (122 aa). The N-linked (GlcNAc...) asparagine glycan is linked to asparagine 123. 2 cysteine pairs are disulfide-bonded: cysteine 160-cysteine 203 and cysteine 194-cysteine 236. Cysteine 163 is an active-site residue. Asparagine 252 is a glycosylation site (N-linked (GlcNAc...) asparagine). Cysteine 294 and cysteine 344 are joined by a disulfide. Active-site residues include histidine 303 and asparagine 323.

Belongs to the peptidase C1 family. Predominantly expressed in stem and root.

The protein resides in the vacuole. This chain is Cysteine proteinase 3 (CYP-3), found in Solanum lycopersicum (Tomato).